The primary structure comprises 139 residues: uncharacterized protein (139 aa).

The disordered stretch occupies residues 1–26 (MQLVREKRGAHQHVPRKTTEPQKVRG). The segment covering 17–26 (KTTEPQKVRG) has biased composition (basic and acidic residues).

This is an uncharacterized protein from Ictalurid herpesvirus 1 (strain Auburn) (IcHV-1).